A 160-amino-acid polypeptide reads, in one-letter code: MTKEVIVESFELDHTIVKAPYVRLISEEFGPKGDRITNFDVRLVQPNQNSIETAGLHTIEHLLAKLIRQRIDGMIDCSPFGCRTGFHLIMWGKHSSTDIAKVIKSSLEEIATGITWEDVPGTTLESCGNYKDHNLFAAKEWAQLIIDQGISDDPFSRHVI.

Fe cation contacts are provided by His-57, His-61, and Cys-127.

This sequence belongs to the LuxS family. In terms of assembly, homodimer. Fe cation serves as cofactor.

It catalyses the reaction S-(5-deoxy-D-ribos-5-yl)-L-homocysteine = (S)-4,5-dihydroxypentane-2,3-dione + L-homocysteine. Its function is as follows. Involved in the synthesis of autoinducer 2 (AI-2) which is secreted by bacteria and is used to communicate both the cell density and the metabolic potential of the environment. The regulation of gene expression in response to changes in cell density is called quorum sensing. Catalyzes the transformation of S-ribosylhomocysteine (RHC) to homocysteine (HC) and 4,5-dihydroxy-2,3-pentadione (DPD). The sequence is that of S-ribosylhomocysteine lyase from Streptococcus pyogenes serotype M4 (strain MGAS10750).